A 146-amino-acid polypeptide reads, in one-letter code: 3-dehydroquinate dehydratase (146 aa).

Catalysis depends on Y22, which acts as the Proton acceptor. N73, H79, and D86 together coordinate substrate. H101 acts as the Proton donor in catalysis. Substrate-binding positions include 102–103 (IS) and R112.

Belongs to the type-II 3-dehydroquinase family. Homododecamer.

The enzyme catalyses 3-dehydroquinate = 3-dehydroshikimate + H2O. It functions in the pathway metabolic intermediate biosynthesis; chorismate biosynthesis; chorismate from D-erythrose 4-phosphate and phosphoenolpyruvate: step 3/7. Functionally, catalyzes a trans-dehydration via an enolate intermediate. The chain is 3-dehydroquinate dehydratase (aroQ) from Corynebacterium pseudotuberculosis (strain C231).